The chain runs to 102 residues: Small ribosomal subunit protein eS24 (102 aa).

Belongs to the eukaryotic ribosomal protein eS24 family.

The polypeptide is Small ribosomal subunit protein eS24 (Methanococcus maripaludis (strain C7 / ATCC BAA-1331)).